The sequence spans 531 residues: Probable calcium-binding mitochondrial carrier F17E5.2 (531 aa).

EF-hand domains lie at 70–105, 106–135, 136–171, and 172–207; these read EKEKKIRDMYDRLDADNDGSIDIRDLTQALSLQAHI, PASVAPKLLERMKSEHSDRVTYADFTNYVI, AHEARLAEVFDKIDLNSDGEVDMAEIKSYCKEMGVN, and LDDQKAMSIVKKMDQSGSSSVNLNEFQDFMLLYPST. Ca(2+)-binding residues include Asp-83, Asp-85, Asp-87, Ser-89, and Asp-94. Ca(2+) contacts are provided by Asp-149, Asn-151, Asp-153, Glu-155, and Glu-160. 3 Solcar repeats span residues 242–328, 338–424, and 435–525; these read GVWW…IKRW, LSTI…LKSM, and PGVL…VRKQ. Helical transmembrane passes span 248–265, 303–322, 348–361, 399–418, 441–458, and 500–517; these read LVAGGVAGAMSRTCTAPF, GNGINVIKIAPESAMKFMCY, SSAGAISQTAIYPM, GYLPNLLGIIPYAGIDLTVY, LACGTCSSTCGQLASYPL, and GITPNFMKVIPAVSISYV.

The protein belongs to the mitochondrial carrier (TC 2.A.29) family.

It localises to the mitochondrion inner membrane. Its function is as follows. Calcium-dependent mitochondrial solute carrier. This is Probable calcium-binding mitochondrial carrier F17E5.2 from Caenorhabditis elegans.